Reading from the N-terminus, the 84-residue chain is MDKMKSYIYFFTIACIIAVIYCVLVNLLQINVIPVVLAFSLILILTISTINKKIAHKMEDIEVLFMLLVLAFFAYAIYKLYIPV.

Transmembrane regions (helical) follow at residues 8–28 (IYFF…VNLL), 30–50 (INVI…ISTI), and 63–83 (VLFM…LYIP).

The protein localises to the cell membrane. This is an uncharacterized protein from Methanocaldococcus jannaschii (strain ATCC 43067 / DSM 2661 / JAL-1 / JCM 10045 / NBRC 100440) (Methanococcus jannaschii).